The sequence spans 514 residues: Vacuolar aminopeptidase 1 (514 aa).

The propeptide at 1 to 45 is required for vacuolar localization. Mediates aggregation and vesicle formation in Cvt pathway; that stretch reads MEEQREILEQLKKTLQMLTVEPSKNNQIANEEKEKKENENSWCIL. N-linked (GlcNAc...) asparagine glycosylation is found at Asn107 and Asn110. His132 is a Zn(2+) binding site. Residue His210 participates in substrate binding. Zn(2+) contacts are provided by Asp303, Glu339, and Glu340. Glu339 is a binding site for substrate. Ser356 carries the phosphoserine modification. Asp385 serves as a coordination point for Zn(2+). Positions 385 and 388 each coordinate substrate. Asn448 is a glycosylation site (N-linked (GlcNAc...) asparagine). Residue His479 coordinates Zn(2+).

The protein belongs to the peptidase M18 family. In terms of assembly, homododecamer. The precursor form of aminopeptidase 1 (prApe1) assembles into dodecamers and further aggregates into higher multimers (the Ape1 complex) in the cytoplasm. The Ape1 complex is disaggregated in the vacuolar lumen, but mature aminopeptidase 1 (mApe1) retains its dodecameric form. Dodecamer assembly in the cytoplasm is essential for formation of an enzymatically active complex. If cytoplasmic homododecamerization of prApe1 is disturbed in mutants, homododecamers of mApe1 will form in the vacuole, but they are enzymatically inactive. Interacts with ATG19. Zn(2+) is required as a cofactor. Post-translationally, synthesized in a precursor form (prApe1) that has an amino-terminal propeptide. The N-terminal extension of the 61 kDa precursor is proteolytically processed in two sequential steps. The first step involves proteinase A (PrA/PEP4) and produces a 55 kDa unstable intermediate (iAPI). The second step involves proteinase B (PrB/PRB1) and converts iAPI into the 50 kDa stable, mature enzyme (mApe1).

Its subcellular location is the vacuole. The enzyme catalyses Release of an N-terminal amino acid, preferably a neutral or hydrophobic one, from a polypeptide. Aminoacyl-arylamides are poor substrates.. Its activity is regulated as follows. Strongly and specifically activated by Cl(-) and Br(-), which act as positive allosteric effectors. Inactivated by metal-chelating agents. Functionally, resident vacuolar enzyme that catalyzes the removal of amino acids from the N-terminus of peptides and proteins. Also acts as the major cargo protein of the cytoplasm-to-vacuole targeting (Cvt) pathway. The precursor form of aminopeptidase 1 (prApe1) assembles into dodecamers and the propeptide mediates the aggregation of dodecamers into higher multimers. The multimers are then recognized via the propeptide by their receptor ATG19, and ATG19 further interacts with ATG11, which tethers the APE1-ATG19 complex to the pre-autophagosomal structure (PAS). The cargo-receptor complex (also Cvt complex) is selectively enwrapped by a double-membrane structure termed the Cvt vesicle under vegetative growth conditions and by a similar but larger double-membrane structure termed the autophagosome under nitrogen starvation conditions. The Cvt vesicle or the autophagosome fuses with the vacuolar membrane and release its content in the vacuolar lumen. In the vacuole, prApe1 is processed into mature aminopeptidase 1 (mApe1). The sequence is that of Vacuolar aminopeptidase 1 from Saccharomyces cerevisiae (strain ATCC 204508 / S288c) (Baker's yeast).